Reading from the N-terminus, the 456-residue chain is Exodeoxyribonuclease 7 large subunit (456 aa).

This sequence belongs to the XseA family. Heterooligomer composed of large and small subunits.

The protein resides in the cytoplasm. It carries out the reaction Exonucleolytic cleavage in either 5'- to 3'- or 3'- to 5'-direction to yield nucleoside 5'-phosphates.. Its function is as follows. Bidirectionally degrades single-stranded DNA into large acid-insoluble oligonucleotides, which are then degraded further into small acid-soluble oligonucleotides. The chain is Exodeoxyribonuclease 7 large subunit from Erwinia tasmaniensis (strain DSM 17950 / CFBP 7177 / CIP 109463 / NCPPB 4357 / Et1/99).